A 375-amino-acid polypeptide reads, in one-letter code: 4,4'-diaponeurosporenoate glycosyltransferase (375 aa).

The next 4 helical transmembrane spans lie at 3-23 (WLSRILTVIVTMSMACGALIF), 164-184 (FYEGFSAIFNLMTVVGMNVFS), 277-297 (IMTAIVLWLFGSIASILGLCL), and 330-350 (FSNLLMVCHPLLFMFFTKIFI).

This sequence belongs to the glycosyltransferase 2 family. CrtQ subfamily.

Its subcellular location is the cell membrane. Its pathway is carotenoid biosynthesis; staphyloxanthin biosynthesis; staphyloxanthin from farnesyl diphosphate: step 4/5. Functionally, catalyzes the glycosylation of 4,4'-diaponeurosporenoate, i.e. the esterification of glucose at the C1'' position with the carboxyl group of 4,4'-diaponeurosporenic acid, to form glycosyl-4,4'-diaponeurosporenoate. This is a step in the biosynthesis of staphyloxanthin, an orange pigment present in most staphylococci strains. In Staphylococcus aureus (strain USA300), this protein is 4,4'-diaponeurosporenoate glycosyltransferase (crtQ).